The chain runs to 390 residues: Chorismate synthase (390 aa).

Residues R48 and R54 each coordinate NADP(+). FMN contacts are provided by residues 132–134, 244–245, G289, 304–308, and R330; these read RSS, NA, and KPTSS. Residues 362-390 are disordered; that stretch reads VGAHPAGAHPAGADPAGTHPGGPGGFQPG. The segment covering 363–379 has biased composition (low complexity); sequence GAHPAGAHPAGADPAGT. A compositionally biased stretch (gly residues) spans 380-390; the sequence is HPGGPGGFQPG.

This sequence belongs to the chorismate synthase family. Homotetramer. It depends on FMNH2 as a cofactor.

It carries out the reaction 5-O-(1-carboxyvinyl)-3-phosphoshikimate = chorismate + phosphate. The protein operates within metabolic intermediate biosynthesis; chorismate biosynthesis; chorismate from D-erythrose 4-phosphate and phosphoenolpyruvate: step 7/7. Functionally, catalyzes the anti-1,4-elimination of the C-3 phosphate and the C-6 proR hydrogen from 5-enolpyruvylshikimate-3-phosphate (EPSP) to yield chorismate, which is the branch point compound that serves as the starting substrate for the three terminal pathways of aromatic amino acid biosynthesis. This reaction introduces a second double bond into the aromatic ring system. This Methylobacterium sp. (strain 4-46) protein is Chorismate synthase.